The chain runs to 302 residues: Homoserine O-acetyltransferase (302 aa).

The active-site Acyl-thioester intermediate is cysteine 142. Substrate contacts are provided by lysine 163 and serine 192. Histidine 235 functions as the Proton acceptor in the catalytic mechanism. Residue glutamate 237 is part of the active site. Arginine 249 lines the substrate pocket.

It belongs to the MetA family.

It is found in the cytoplasm. The enzyme catalyses L-homoserine + acetyl-CoA = O-acetyl-L-homoserine + CoA. It participates in amino-acid biosynthesis; L-methionine biosynthesis via de novo pathway; O-acetyl-L-homoserine from L-homoserine: step 1/1. In terms of biological role, transfers an acetyl group from acetyl-CoA to L-homoserine, forming acetyl-L-homoserine. In Bacillus pumilus (strain SAFR-032), this protein is Homoserine O-acetyltransferase.